A 207-amino-acid chain; its full sequence is Large ribosomal subunit protein uL4 (207 aa).

The tract at residues 53–85 (ERSDVARTGKKFGRQKGGGTARHGDRKAPIFIG) is disordered.

Belongs to the universal ribosomal protein uL4 family. As to quaternary structure, part of the 50S ribosomal subunit.

One of the primary rRNA binding proteins, this protein initially binds near the 5'-end of the 23S rRNA. It is important during the early stages of 50S assembly. It makes multiple contacts with different domains of the 23S rRNA in the assembled 50S subunit and ribosome. Its function is as follows. Forms part of the polypeptide exit tunnel. The polypeptide is Large ribosomal subunit protein uL4 (Novosphingobium aromaticivorans (strain ATCC 700278 / DSM 12444 / CCUG 56034 / CIP 105152 / NBRC 16084 / F199)).